The primary structure comprises 61 residues: Small ribosomal subunit protein uS14 (61 aa).

Residues Cys-24, Cys-27, Cys-40, and Cys-43 each contribute to the Zn(2+) site.

The protein belongs to the universal ribosomal protein uS14 family. Zinc-binding uS14 subfamily. Part of the 30S ribosomal subunit. Contacts proteins S3 and S10. The cofactor is Zn(2+).

Its function is as follows. Binds 16S rRNA, required for the assembly of 30S particles and may also be responsible for determining the conformation of the 16S rRNA at the A site. The polypeptide is Small ribosomal subunit protein uS14 (Thermoanaerobacter sp. (strain X514)).